The sequence spans 159 residues: Ribosomal RNA large subunit methyltransferase H (159 aa).

Residues Leu76, Gly108, and 127-132 (FGLLTL) contribute to the S-adenosyl-L-methionine site.

Belongs to the RNA methyltransferase RlmH family. In terms of assembly, homodimer.

Its subcellular location is the cytoplasm. It carries out the reaction pseudouridine(1915) in 23S rRNA + S-adenosyl-L-methionine = N(3)-methylpseudouridine(1915) in 23S rRNA + S-adenosyl-L-homocysteine + H(+). Its function is as follows. Specifically methylates the pseudouridine at position 1915 (m3Psi1915) in 23S rRNA. This is Ribosomal RNA large subunit methyltransferase H from Leuconostoc citreum (strain KM20).